The following is a 316-amino-acid chain: GMP reductase (316 aa).

Cysteine 175 acts as the Thioimidate intermediate in catalysis. 202–225 (VIADGGIVEHGDIAKALVCGATMV) is an NADP(+) binding site.

The protein belongs to the IMPDH/GMPR family. GuaC type 2 subfamily.

It carries out the reaction IMP + NH4(+) + NADP(+) = GMP + NADPH + 2 H(+). Its function is as follows. Catalyzes the irreversible NADPH-dependent deamination of GMP to IMP. It functions in the conversion of nucleobase, nucleoside and nucleotide derivatives of G to A nucleotides, and in maintaining the intracellular balance of A and G nucleotides. The protein is GMP reductase of Chromobacterium violaceum (strain ATCC 12472 / DSM 30191 / JCM 1249 / CCUG 213 / NBRC 12614 / NCIMB 9131 / NCTC 9757 / MK).